The chain runs to 338 residues: Holliday junction branch migration complex subunit RuvB (338 aa).

The interval 1–181 is large ATPase domain (RuvB-L); the sequence is MTTRTISPEK…FGVISRLEFY (181 aa). ATP contacts are provided by residues Leu-20, Arg-21, Gly-62, Lys-65, Thr-66, Thr-67, 128 to 130, Arg-171, Tyr-181, and Arg-218; that span reads EDF. Thr-66 serves as a coordination point for Mg(2+). Residues 182-252 are small ATPAse domain (RuvB-S); sequence TDAELSTIVT…VVDESLKLLE (71 aa). A head domain (RuvB-H) region spans residues 255-338; that stretch reads EKGFDQMDRT…APAPGQGALF (84 aa). The DNA site is built by Arg-291, Arg-310, and Arg-315.

It belongs to the RuvB family. As to quaternary structure, homohexamer. Forms an RuvA(8)-RuvB(12)-Holliday junction (HJ) complex. HJ DNA is sandwiched between 2 RuvA tetramers; dsDNA enters through RuvA and exits via RuvB. An RuvB hexamer assembles on each DNA strand where it exits the tetramer. Each RuvB hexamer is contacted by two RuvA subunits (via domain III) on 2 adjacent RuvB subunits; this complex drives branch migration. In the full resolvosome a probable DNA-RuvA(4)-RuvB(12)-RuvC(2) complex forms which resolves the HJ.

Its subcellular location is the cytoplasm. It carries out the reaction ATP + H2O = ADP + phosphate + H(+). Functionally, the RuvA-RuvB-RuvC complex processes Holliday junction (HJ) DNA during genetic recombination and DNA repair, while the RuvA-RuvB complex plays an important role in the rescue of blocked DNA replication forks via replication fork reversal (RFR). RuvA specifically binds to HJ cruciform DNA, conferring on it an open structure. The RuvB hexamer acts as an ATP-dependent pump, pulling dsDNA into and through the RuvAB complex. RuvB forms 2 homohexamers on either side of HJ DNA bound by 1 or 2 RuvA tetramers; 4 subunits per hexamer contact DNA at a time. Coordinated motions by a converter formed by DNA-disengaged RuvB subunits stimulates ATP hydrolysis and nucleotide exchange. Immobilization of the converter enables RuvB to convert the ATP-contained energy into a lever motion, pulling 2 nucleotides of DNA out of the RuvA tetramer per ATP hydrolyzed, thus driving DNA branch migration. The RuvB motors rotate together with the DNA substrate, which together with the progressing nucleotide cycle form the mechanistic basis for DNA recombination by continuous HJ branch migration. Branch migration allows RuvC to scan DNA until it finds its consensus sequence, where it cleaves and resolves cruciform DNA. The sequence is that of Holliday junction branch migration complex subunit RuvB from Geobacter sulfurreducens (strain ATCC 51573 / DSM 12127 / PCA).